A 491-amino-acid polypeptide reads, in one-letter code: Probable ribonuclease FAU-1 (491 aa).

The protein belongs to the FAU-1 family.

Its function is as follows. Probable RNase involved in rRNA stability through maturation and/or degradation of precursor rRNAs. Binds to RNA in loop regions with AU-rich sequences. The chain is Probable ribonuclease FAU-1 from Thermofilum pendens (strain DSM 2475 / Hrk 5).